A 228-amino-acid polypeptide reads, in one-letter code: UPF0758 protein NT01CX_1687 (228 aa).

The MPN domain occupies Ile-106–Leu-228. 3 residues coordinate Zn(2+): His-177, His-179, and Asp-190. A JAMM motif motif is present at residues His-177–Asp-190.

It belongs to the UPF0758 family.

This is UPF0758 protein NT01CX_1687 from Clostridium novyi (strain NT).